Consider the following 117-residue polypeptide: Large ribosomal subunit protein bL19 (117 aa).

It belongs to the bacterial ribosomal protein bL19 family.

Its function is as follows. This protein is located at the 30S-50S ribosomal subunit interface and may play a role in the structure and function of the aminoacyl-tRNA binding site. In Shewanella piezotolerans (strain WP3 / JCM 13877), this protein is Large ribosomal subunit protein bL19.